The chain runs to 622 residues: DNA topoisomerase 3 (622 aa).

Residues 2-148 (RVLCVAEKNS…SIQVIRADFN (147 aa)) enclose the Toprim domain. The Topo IA-type catalytic domain maps to 166–596 (SKNAADAVDA…MILTQFRDVF (431 aa)). Catalysis depends on Tyr330, which acts as the O-(5'-phospho-DNA)-tyrosine intermediate.

It belongs to the type IA topoisomerase family. Interacts with hus2.

The catalysed reaction is ATP-independent breakage of single-stranded DNA, followed by passage and rejoining.. Releases the supercoiling and torsional tension of DNA introduced during the DNA replication and transcription by transiently cleaving and rejoining one strand of the DNA duplex. Introduces a single-strand break via transesterification at a target site in duplex DNA. The scissile phosphodiester is attacked by the catalytic tyrosine of the enzyme, resulting in the formation of a DNA-(5'-phosphotyrosyl)-enzyme intermediate and the expulsion of a 3'-OH DNA strand. The free DNA strand than undergoes passage around the unbroken strand thus removing DNA supercoils. Finally, in the religation step, the DNA 3'-OH attacks the covalent intermediate to expel the active-site tyrosine and restore the DNA phosphodiester backbone. In Schizosaccharomyces pombe (strain 972 / ATCC 24843) (Fission yeast), this protein is DNA topoisomerase 3 (top3).